A 222-amino-acid chain; its full sequence is uncharacterized protein (222 aa).

The region spanning Ala-8–Asp-77 is the HTH gntR-type domain.

This is an uncharacterized protein from Mycoplasma genitalium (strain ATCC 33530 / DSM 19775 / NCTC 10195 / G37) (Mycoplasmoides genitalium).